A 301-amino-acid chain; its full sequence is Alpha-ketoglutarate-dependent sulfate ester dioxygenase (301 aa).

A substrate-binding site is contributed by histidine 81. Fe cation is bound by residues histidine 108 and aspartate 110. Valine 111 provides a ligand contact to substrate. 2-oxoglutarate is bound at residue threonine 135. Position 264 (histidine 264) interacts with Fe cation. Positions 275 and 279 each coordinate 2-oxoglutarate.

This sequence belongs to the TfdA dioxygenase family. Homotetramer. Requires Fe(2+) as cofactor.

The enzyme catalyses a primary linear alkyl sulfate ester + 2-oxoglutarate + O2 = an aldehyde + sulfate + succinate + CO2 + H(+). It carries out the reaction 2-ethylhexyl sulfate + 2-oxoglutarate + O2 = 2-ethylhexanal + sulfate + succinate + CO2 + H(+). It catalyses the reaction decyl sulfate + 2-oxoglutarate + O2 = decanal + sulfate + succinate + CO2 + H(+). The catalysed reaction is hexyl sulfate + 2-oxoglutarate + O2 = hexanal + sulfate + succinate + CO2 + H(+). The enzyme catalyses nonyl sufate + 2-oxoglutarate + O2 = nonanal + sulfate + succinate + CO2 + H(+). With respect to regulation, strongly stimulated by ascorbate. In terms of biological role, catalyzes the oxygenolytic cleavage of 2-ethylhexyl sulfate (2-EHS) in the presence of alpha-ketoglutarate to yield 2-ethyl-hexanal and succinate, the decarboxylated form of alpha-ketoglutarate. It can accept a wide range of alpha-keto acids including 2-oxo-valerate, 2-oxo-adipate, 2-oxo-octanoate, 3-methyl-2-oxo-butyrate, oxaloacetate-alpha-ketoadipate, and alpha-ketooctanoate. It can catalyze the cleavage of medium-chain alkyl sulfate esters such as butylsulfate, pentylsulfate, hexylsulfate, heptylsulfate, octylsulfate, nonylsulfate, decylsulfate and sodium dodecyl sulfate (SDS). The sequence is that of Alpha-ketoglutarate-dependent sulfate ester dioxygenase from Pseudomonas putida (Arthrobacter siderocapsulatus).